The chain runs to 516 residues: Solute carrier family 49 member A3 (516 aa).

A compositionally biased stretch (basic and acidic residues) spans Met-1–Asp-10. A disordered region spans residues Met-1–Asp-22. 12 helical membrane passes run Trp-34–Phe-54, Trp-74–Leu-94, Ile-104–Val-124, Leu-139–Phe-159, Ile-170–Val-190, Met-199–Trp-219, Val-253–Leu-273, Leu-289–Val-309, Ile-321–Gly-341, Leu-344–Val-364, Gly-382–Leu-402, and Val-425–Phe-445. Positions Glu-453–Val-516 are disordered. Residues Gly-504–Val-516 show a composition bias toward basic and acidic residues.

This sequence belongs to the major facilitator superfamily.

The protein localises to the membrane. This chain is Solute carrier family 49 member A3 (Slc49a3), found in Mus musculus (Mouse).